The sequence spans 225 residues: UPF0173 metal-dependent hydrolase Aflv_0488 (225 aa).

This sequence belongs to the UPF0173 family.

This chain is UPF0173 metal-dependent hydrolase Aflv_0488, found in Anoxybacillus flavithermus (strain DSM 21510 / WK1).